We begin with the raw amino-acid sequence, 191 residues long: Protein hugin (191 aa).

Positions 1–24 (MCGPSYCTLLLIAASCYILVCSHA) are cleaved as a signal peptide. A propeptide spanning residues 25–119 (KSLQGTSKLD…LTYYLLLQKL (95 aa)) is cleaved from the precursor. Leucine amide is present on residues L137 and L181. Residues 185–191 (AQVCGGD) constitute a propeptide that is removed on maturation.

It belongs to the pyrokinin family. In terms of tissue distribution, expressed in a subgroup of neurosecretory cells in the subesophageal ganglion from embryonic stage 9 to larval stages.

The protein localises to the secreted. Its function is as follows. Probably has a role in larval molting. The sequence is that of Protein hugin (Hug) from Drosophila melanogaster (Fruit fly).